Reading from the N-terminus, the 363-residue chain is Probable butyrate kinase (363 aa).

The protein belongs to the acetokinase family.

Its subcellular location is the cytoplasm. The catalysed reaction is butanoate + ATP = butanoyl phosphate + ADP. The sequence is that of Probable butyrate kinase from Maridesulfovibrio salexigens (strain ATCC 14822 / DSM 2638 / NCIMB 8403 / VKM B-1763) (Desulfovibrio salexigens).